Reading from the N-terminus, the 290-residue chain is D-tagatose-1,6-bisphosphate aldolase subunit KbaY (290 aa).

The Proton donor role is filled by D82. The Zn(2+) site is built by H83 and H180. G181 serves as a coordination point for dihydroxyacetone phosphate. Zn(2+) is bound at residue H208. Residues 209-211 (GAS) and 230-233 (NVAT) each bind dihydroxyacetone phosphate.

It belongs to the class II fructose-bisphosphate aldolase family. TagBP aldolase KbaY subfamily. As to quaternary structure, homotetramer. Forms a complex with KbaZ. Zn(2+) serves as cofactor.

The catalysed reaction is D-tagatofuranose 1,6-bisphosphate = D-glyceraldehyde 3-phosphate + dihydroxyacetone phosphate. The protein operates within carbohydrate metabolism; D-tagatose 6-phosphate degradation; D-glyceraldehyde 3-phosphate and glycerone phosphate from D-tagatose 6-phosphate: step 2/2. Catalytic subunit of the tagatose-1,6-bisphosphate aldolase KbaYZ, which catalyzes the reversible aldol condensation of dihydroxyacetone phosphate (DHAP or glycerone-phosphate) with glyceraldehyde 3-phosphate (G3P) to produce tagatose 1,6-bisphosphate (TBP). Requires KbaZ subunit for full activity and stability. This Salmonella arizonae (strain ATCC BAA-731 / CDC346-86 / RSK2980) protein is D-tagatose-1,6-bisphosphate aldolase subunit KbaY.